A 300-amino-acid chain; its full sequence is 33 kDa chaperonin (300 aa).

2 cysteine pairs are disulfide-bonded: C235–C237 and C269–C272.

This sequence belongs to the HSP33 family. In terms of processing, under oxidizing conditions two disulfide bonds are formed involving the reactive cysteines. Under reducing conditions zinc is bound to the reactive cysteines and the protein is inactive.

It localises to the cytoplasm. Its function is as follows. Redox regulated molecular chaperone. Protects both thermally unfolding and oxidatively damaged proteins from irreversible aggregation. Plays an important role in the bacterial defense system toward oxidative stress. This chain is 33 kDa chaperonin, found in Pseudomonas fluorescens (strain ATCC BAA-477 / NRRL B-23932 / Pf-5).